The primary structure comprises 1425 residues: Protein NAP1 (1425 aa).

Polar residues-rich tracts occupy residues 1-20 (MANS…PTSV), 1299-1312 (TPLS…SPSV), and 1320-1329 (SMKNSTTPQR). Disordered regions lie at residues 1-24 (MANS…RSRE) and 1299-1425 (TPLS…KQHN). Low complexity predominate over residues 1362-1405 (SETGNSRNNENNNNNKQRGSSRRSGPLDYSSSHKGGSGSNSTGP).

It belongs to the HEM-1/HEM-2 family. As to quaternary structure, binds PIR. In terms of tissue distribution, expressed in roots, root hairs, hypocotyls, cotyledons, stems, leaves, trichomes, and flowers.

Its function is as follows. Involved in regulation of actin and microtubule organization. Part of a WAVE complex that activates the Arp2/3 complex. The protein is Protein NAP1 (NAP1) of Arabidopsis thaliana (Mouse-ear cress).